Here is a 91-residue protein sequence, read N- to C-terminus: Small ribosomal subunit protein uS19 (91 aa).

Belongs to the universal ribosomal protein uS19 family.

Functionally, protein S19 forms a complex with S13 that binds strongly to the 16S ribosomal RNA. This Mycoplasmopsis pulmonis (strain UAB CTIP) (Mycoplasma pulmonis) protein is Small ribosomal subunit protein uS19 (rpsS).